The sequence spans 445 residues: Probable glycine dehydrogenase (decarboxylating) subunit 1 (445 aa).

The protein belongs to the GcvP family. N-terminal subunit subfamily. The glycine cleavage system is composed of four proteins: P, T, L and H. In this organism, the P 'protein' is a heterodimer of two subunits.

It catalyses the reaction N(6)-[(R)-lipoyl]-L-lysyl-[glycine-cleavage complex H protein] + glycine + H(+) = N(6)-[(R)-S(8)-aminomethyldihydrolipoyl]-L-lysyl-[glycine-cleavage complex H protein] + CO2. Functionally, the glycine cleavage system catalyzes the degradation of glycine. The P protein binds the alpha-amino group of glycine through its pyridoxal phosphate cofactor; CO(2) is released and the remaining methylamine moiety is then transferred to the lipoamide cofactor of the H protein. The sequence is that of Probable glycine dehydrogenase (decarboxylating) subunit 1 from Anaeromyxobacter dehalogenans (strain 2CP-C).